A 2323-amino-acid polypeptide reads, in one-letter code: C2 domain-containing protein 3 (2323 aa).

Disordered regions lie at residues 1 to 27 (MKQR…SPST), 193 to 215 (RELR…SCRG), 402 to 426 (WNGL…DLND), 444 to 509 (SDVG…HTPA), 537 to 556 (PDSP…PPKP), and 698 to 745 (KLSS…TKKT). Polar residues predominate over residues 200–209 (ESSNTQSMIP). Phosphoserine is present on Ser453. The segment covering 474-483 (KVVESKEQKQ) has biased composition (basic and acidic residues). The region spanning 504–663 (PGHTPAMSLS…IQSELLSFSS (160 aa)) is the C2 1 domain. The segment covering 698–735 (KLSSSTQPAPVSAATSSDTILPETGQDTACTRNPQSSN) has biased composition (polar residues). A Phosphoserine modification is found at Ser713. 4 C2 domains span residues 771–903 (SCNL…SRLL), 969–1131 (QPPV…YRED), 1155–1323 (SSGF…TGWY), and 1383–1517 (KEEE…TLTI). The segment covering 1550–1574 (EPARELDSMDCSSHSESEQHPRKSD) has biased composition (basic and acidic residues). 2 disordered regions span residues 1550–1599 (EPAR…NSAA) and 1798–1824 (LAHT…AARH). The segment covering 1584 to 1599 (LQTSPTSTQVHGNSAA) has biased composition (polar residues). Residues 1598–1726 (AAAQVCPAQE…SGFQFICGWY (129 aa)) enclose the C2 6 domain. Phosphoserine is present on Ser1871. Disordered regions lie at residues 1891–1918 (FSSQ…GRQD), 1952–2013 (ALTS…GGML), 2074–2163 (SEVL…SVGW), 2182–2231 (SEAF…EVST), and 2261–2323 (SHSP…TEET). Low complexity predominate over residues 1892 to 1904 (SSQSSPAVSQSQE). Polar residues-rich tracts occupy residues 1952-1965 (ALTS…SRAV) and 2074-2083 (SEVLSPQPTE). Residues 2110-2125 (AVSPQPAQGSPSQSGV) are compositionally biased toward low complexity. Residues 2147–2158 (PSLTFSEAQEGS) are compositionally biased toward polar residues. Low complexity predominate over residues 2182–2197 (SEAFSSEFSDSSESFE). Over residues 2207–2216 (SKREDYKDSP) the composition is skewed to basic and acidic residues. Over residues 2222–2231 (QVPTGSEVST) the composition is skewed to polar residues.

Interacts with OFD1; OFD1 may act as a negative regulator of C2CD3. Associates with the BBSome complex. Interacts with IFT88, BBS4 and PCM1.

It is found in the cytoplasm. The protein localises to the cytoskeleton. It localises to the cilium basal body. Its subcellular location is the microtubule organizing center. The protein resides in the centrosome. It is found in the centriole. In terms of biological role, component of the centrioles that acts as a positive regulator of centriole elongation. Promotes assembly of centriolar distal appendage, a structure at the distal end of the mother centriole that acts as an anchor of the cilium, and is required for recruitment of centriolar distal appendages proteins CEP83, SCLT1, CEP89, FBF1 and CEP164. Not required for centriolar satellite integrity or RAB8 activation. Required for primary cilium formation. Required for sonic hedgehog/SHH signaling and for proteolytic processing of GLI3. The polypeptide is C2 domain-containing protein 3 (C2cd3) (Mus musculus (Mouse)).